The following is a 484-amino-acid chain: Phospholipase A1-Ialpha2, chloroplastic (484 aa).

The N-terminal 63 residues, M1–V63, are a transit peptide targeting the chloroplast. The short motif at G295–G299 is the GXSXG element. S297 acts as the Acyl-ester intermediate in catalysis. Residues D360 and H411 each act as charge relay system in the active site.

It belongs to the AB hydrolase superfamily. Lipase family. As to expression, ubiquitous. Highest expression in flowers and leaves.

It localises to the plastid. The protein localises to the chloroplast. Its subcellular location is the plastoglobule. It carries out the reaction a 1,2-diacyl-3-O-[alpha-D-galactosyl-(1-&gt;6)-beta-D-galactosyl]-sn-glycerol + H2O = acyl-3-O-[alpha-D-galactosyl-(1-&gt;6)-beta-D-galactosyl]-sn-glycerol + a fatty acid + H(+). It catalyses the reaction a 1,2-diacyl-3-O-(beta-D-galactosyl)-sn-glycerol + H2O = an acyl-3-O-(beta-D-galactosyl)-sn-glycerol + a fatty acid + H(+). Its function is as follows. Acylhydrolase that catalyzes the hydrolysis of phosphatidylcholine at the sn-1 position. Has a strong galactolipase activity toward monogalactosyldiacylglycerol (MGDG) and digalactosyldiacylglycerol (DGDG). Low triacylglycerol (TAG) lipase activity. Plays a role in plant growth and in leaf senescence. This chain is Phospholipase A1-Ialpha2, chloroplastic, found in Arabidopsis thaliana (Mouse-ear cress).